Consider the following 146-residue polypeptide: Mitochondrial import receptor subunit TOM20 homolog B (146 aa).

At 1–5 (MMGGS) the chain is on the mitochondrial intermembrane side. A helical membrane pass occupies residues 6 to 25 (SSRIAAGLGAALFVGYCIYF). The Cytoplasmic segment spans residues 26 to 146 (DRKRRSDPNY…AQSISDDDIE (121 aa)). Residues 37 to 47 (NKLRERRKKQK) are compositionally biased toward basic residues. The interval 37–56 (NKLRERRKKQKAAQEKAGLS) is disordered. Ser141 bears the Phosphoserine mark.

Belongs to the Tom20 family. Forms part of the preprotein translocase complex of the outer mitochondrial membrane (TOM complex). Interacts with tom22.

It localises to the mitochondrion outer membrane. In terms of biological role, central component of the receptor complex responsible for the recognition and translocation of cytosolically synthesized mitochondrial preproteins. Together with tom22 functions as the transit peptide receptor at the surface of the mitochondrion outer membrane and facilitates the movement of preproteins into the tom40 translocation pore. The protein is Mitochondrial import receptor subunit TOM20 homolog B (tomm20b) of Danio rerio (Zebrafish).